Consider the following 177-residue polypeptide: MGELHSVASAVTAVAAEAAEEGGKQNNFLIPNGTFFVVLAIFLIVLAVIGTFVVPPIQKVLKAREDMVTKTAEDNRNAAEQFTAAEADYKDELAKARGAATAVRDEARAEGRGILEDMRQRANAEATAVTETAAAELARQGEVTAGELATNVDSLSRTLAERVLGVSLSEPANAGRG.

A helical membrane pass occupies residues 35–55 (FFVVLAIFLIVLAVIGTFVVP).

This sequence belongs to the ATPase B chain family. F-type ATPases have 2 components, F(1) - the catalytic core - and F(0) - the membrane proton channel. F(1) has five subunits: alpha(3), beta(3), gamma(1), delta(1), epsilon(1). F(0) has three main subunits: a(1), b(2) and c(10-14). The alpha and beta chains form an alternating ring which encloses part of the gamma chain. F(1) is attached to F(0) by a central stalk formed by the gamma and epsilon chains, while a peripheral stalk is formed by the delta and b chains.

It localises to the cell membrane. Its function is as follows. F(1)F(0) ATP synthase produces ATP from ADP in the presence of a proton or sodium gradient. F-type ATPases consist of two structural domains, F(1) containing the extramembraneous catalytic core and F(0) containing the membrane proton channel, linked together by a central stalk and a peripheral stalk. During catalysis, ATP synthesis in the catalytic domain of F(1) is coupled via a rotary mechanism of the central stalk subunits to proton translocation. In terms of biological role, component of the F(0) channel, it forms part of the peripheral stalk, linking F(1) to F(0). The protein is ATP synthase subunit b of Mycobacteroides abscessus (strain ATCC 19977 / DSM 44196 / CCUG 20993 / CIP 104536 / JCM 13569 / NCTC 13031 / TMC 1543 / L948) (Mycobacterium abscessus).